The sequence spans 325 residues: Probable isoaspartyl peptidase/L-asparaginase 2 (325 aa).

Catalysis depends on threonine 195, which acts as the Nucleophile. Substrate contacts are provided by residues 223–226 (RIGD) and 245–248 (TGEG).

Belongs to the Ntn-hydrolase family. In terms of assembly, heterotetramer of two alpha and two beta chains arranged as a dimer of alpha/beta heterodimers. Post-translationally, cleaved into an alpha and beta chain by autocatalysis; this activates the enzyme. The N-terminal residue of the beta subunit is responsible for the nucleophile hydrolase activity.

The catalysed reaction is Cleavage of a beta-linked Asp residue from the N-terminus of a polypeptide.. Its function is as follows. Acts in asparagine catabolism and also in the final steps of protein degradation via hydrolysis of a range of isoaspartyl dipeptides. The protein is Probable isoaspartyl peptidase/L-asparaginase 2 of Arabidopsis thaliana (Mouse-ear cress).